We begin with the raw amino-acid sequence, 188 residues long: NADH-quinone oxidoreductase subunit B 1 (188 aa).

Residues cysteine 32, cysteine 33, cysteine 98, and cysteine 128 each contribute to the [4Fe-4S] cluster site. The interval 153-188 (VGGVSRPDALASPADALPPRAADSLTAPPVRPPDPS) is disordered. Residues 157–177 (SRPDALASPADALPPRAADSL) are compositionally biased toward low complexity.

Belongs to the complex I 20 kDa subunit family. In terms of assembly, NDH-1 is composed of 14 different subunits. Subunits NuoB, C, D, E, F, and G constitute the peripheral sector of the complex. [4Fe-4S] cluster is required as a cofactor.

Its subcellular location is the cell membrane. The enzyme catalyses a quinone + NADH + 5 H(+)(in) = a quinol + NAD(+) + 4 H(+)(out). Its function is as follows. NDH-1 shuttles electrons from NADH, via FMN and iron-sulfur (Fe-S) centers, to quinones in the respiratory chain. The immediate electron acceptor for the enzyme in this species is believed to be a menaquinone. Couples the redox reaction to proton translocation (for every two electrons transferred, four hydrogen ions are translocated across the cytoplasmic membrane), and thus conserves the redox energy in a proton gradient. This is NADH-quinone oxidoreductase subunit B 1 (nuoB1) from Salinispora tropica (strain ATCC BAA-916 / DSM 44818 / JCM 13857 / NBRC 105044 / CNB-440).